A 193-amino-acid chain; its full sequence is Acyl carrier protein phosphodiesterase (193 aa).

The protein belongs to the AcpH family.

It carries out the reaction holo-[ACP] + H2O = apo-[ACP] + (R)-4'-phosphopantetheine + H(+). Converts holo-ACP to apo-ACP by hydrolytic cleavage of the phosphopantetheine prosthetic group from ACP. This chain is Acyl carrier protein phosphodiesterase, found in Escherichia coli O6:H1 (strain CFT073 / ATCC 700928 / UPEC).